Consider the following 142-residue polypeptide: MPVERTFVMIKPDGVKRGLVGEIIARFERKGLKIKALKMKWLTREEAEKLYEVHRGKPFFEDLVNFVTSGPVVAMILEGDSAIEVVRLMIGPTDGRKAPPGTIRGDYALDIGANVIHASDSKESYEREYKVFFSDDEIVGDY.

The ATP site is built by K11, F59, R87, T93, R104, and N114. Residue H117 is the Pros-phosphohistidine intermediate of the active site.

The protein belongs to the NDK family. It depends on Mg(2+) as a cofactor.

The protein resides in the cytoplasm. It carries out the reaction a 2'-deoxyribonucleoside 5'-diphosphate + ATP = a 2'-deoxyribonucleoside 5'-triphosphate + ADP. The enzyme catalyses a ribonucleoside 5'-diphosphate + ATP = a ribonucleoside 5'-triphosphate + ADP. In terms of biological role, major role in the synthesis of nucleoside triphosphates other than ATP. The ATP gamma phosphate is transferred to the NDP beta phosphate via a ping-pong mechanism, using a phosphorylated active-site intermediate. In Hyperthermus butylicus (strain DSM 5456 / JCM 9403 / PLM1-5), this protein is Nucleoside diphosphate kinase.